The primary structure comprises 290 residues: ATP phosphoribosyltransferase (290 aa).

Belongs to the ATP phosphoribosyltransferase family. Long subfamily. The cofactor is Mg(2+).

The protein localises to the cytoplasm. It carries out the reaction 1-(5-phospho-beta-D-ribosyl)-ATP + diphosphate = 5-phospho-alpha-D-ribose 1-diphosphate + ATP. The protein operates within amino-acid biosynthesis; L-histidine biosynthesis; L-histidine from 5-phospho-alpha-D-ribose 1-diphosphate: step 1/9. With respect to regulation, feedback inhibited by histidine. In terms of biological role, catalyzes the condensation of ATP and 5-phosphoribose 1-diphosphate to form N'-(5'-phosphoribosyl)-ATP (PR-ATP). Has a crucial role in the pathway because the rate of histidine biosynthesis seems to be controlled primarily by regulation of HisG enzymatic activity. The chain is ATP phosphoribosyltransferase (hisG) from Saccharolobus solfataricus (strain ATCC 35092 / DSM 1617 / JCM 11322 / P2) (Sulfolobus solfataricus).